The chain runs to 431 residues: Histidinol dehydrogenase (431 aa).

Residues tyrosine 130, glutamine 191, and asparagine 214 each coordinate NAD(+). 3 residues coordinate substrate: serine 237, glutamine 259, and histidine 262. Positions 259 and 262 each coordinate Zn(2+). Active-site proton acceptor residues include glutamate 327 and histidine 328. Positions 328, 361, 415, and 420 each coordinate substrate. Residue aspartate 361 coordinates Zn(2+). A Zn(2+)-binding site is contributed by histidine 420.

Belongs to the histidinol dehydrogenase family. Requires Zn(2+) as cofactor.

The enzyme catalyses L-histidinol + 2 NAD(+) + H2O = L-histidine + 2 NADH + 3 H(+). It functions in the pathway amino-acid biosynthesis; L-histidine biosynthesis; L-histidine from 5-phospho-alpha-D-ribose 1-diphosphate: step 9/9. Functionally, catalyzes the sequential NAD-dependent oxidations of L-histidinol to L-histidinaldehyde and then to L-histidine. The protein is Histidinol dehydrogenase of Rhodopseudomonas palustris (strain ATCC BAA-98 / CGA009).